Consider the following 342-residue polypeptide: Autoinducer 2 import system permease protein LsrC (342 aa).

The Periplasmic segment spans residues Met-1–Ala-13. A helical membrane pass occupies residues Leu-14–Val-34. Over Gln-35 to Thr-38 the chain is Cytoplasmic. The chain crosses the membrane as a helical span at residues Met-39–Leu-59. Over Thr-60–Ser-69 the chain is Periplasmic. The chain crosses the membrane as a helical span at residues Ile-70–Val-90. The Cytoplasmic segment spans residues Ala-91–Cys-92. The chain crosses the membrane as a helical span at residues Val-93–Leu-113. Lys-114 is a topological domain (periplasmic). A helical membrane pass occupies residues Ile-115–Trp-135. Residues Thr-136–Pro-154 are Cytoplasmic-facing. A helical transmembrane segment spans residues Leu-155 to Trp-175. At Leu-176–Ser-212 the chain is on the periplasmic side. A helical transmembrane segment spans residues Leu-213–Pro-233. The Cytoplasmic segment spans residues Asn-234–Gly-251. The helical transmembrane segment at Gly-252 to Leu-272 threads the bilayer. At Thr-273–Arg-283 the chain is on the periplasmic side. Residues Ile-284 to Asp-304 traverse the membrane as a helical segment. The Cytoplasmic segment spans residues Gly-305–Ala-342.

This sequence belongs to the binding-protein-dependent transport system permease family. AraH/RbsC subfamily. The complex is composed of two ATP-binding proteins (LsrA), two transmembrane proteins (LsrC and LsrD) and a solute-binding protein (LsrB).

It localises to the cell inner membrane. Functionally, part of the ABC transporter complex LsrABCD involved in autoinducer 2 (AI-2) import. Probably responsible for the translocation of the substrate across the membrane. The protein is Autoinducer 2 import system permease protein LsrC (lsrC) of Escherichia coli O9:H4 (strain HS).